A 1152-amino-acid polypeptide reads, in one-letter code: DNA-directed RNA polymerase subunit beta (1152 aa).

Belongs to the RNA polymerase beta chain family. In terms of assembly, the RNAP catalytic core consists of 2 alpha, 1 beta, 1 beta' and 1 omega subunit. When a sigma factor is associated with the core the holoenzyme is formed, which can initiate transcription.

It catalyses the reaction RNA(n) + a ribonucleoside 5'-triphosphate = RNA(n+1) + diphosphate. DNA-dependent RNA polymerase catalyzes the transcription of DNA into RNA using the four ribonucleoside triphosphates as substrates. In Deinococcus geothermalis (strain DSM 11300 / CIP 105573 / AG-3a), this protein is DNA-directed RNA polymerase subunit beta.